A 353-amino-acid polypeptide reads, in one-letter code: Protein RecA (353 aa).

73-80 (GPESSGKT) contacts ATP.

Belongs to the RecA family.

It localises to the cytoplasm. Can catalyze the hydrolysis of ATP in the presence of single-stranded DNA, the ATP-dependent uptake of single-stranded DNA by duplex DNA, and the ATP-dependent hybridization of homologous single-stranded DNAs. It interacts with LexA causing its activation and leading to its autocatalytic cleavage. The sequence is that of Protein RecA from Bordetella avium (strain 197N).